Reading from the N-terminus, the 141-residue chain is Large ribosomal subunit protein uL11 (141 aa).

Belongs to the universal ribosomal protein uL11 family. As to quaternary structure, part of the ribosomal stalk of the 50S ribosomal subunit. Interacts with L10 and the large rRNA to form the base of the stalk. L10 forms an elongated spine to which L12 dimers bind in a sequential fashion forming a multimeric L10(L12)X complex. Post-translationally, one or more lysine residues are methylated.

Functionally, forms part of the ribosomal stalk which helps the ribosome interact with GTP-bound translation factors. This chain is Large ribosomal subunit protein uL11, found in Trichodesmium erythraeum (strain IMS101).